Here is a 117-residue protein sequence, read N- to C-terminus: Large ribosomal subunit protein bL19 (117 aa).

It belongs to the bacterial ribosomal protein bL19 family.

In terms of biological role, this protein is located at the 30S-50S ribosomal subunit interface and may play a role in the structure and function of the aminoacyl-tRNA binding site. The chain is Large ribosomal subunit protein bL19 from Desulfotalea psychrophila (strain LSv54 / DSM 12343).